The sequence spans 81 residues: ATP synthase subunit c (81 aa).

Transmembrane regions (helical) follow at residues 7–27 (AASV…PGIG) and 57–77 (LAFM…LLFA).

Belongs to the ATPase C chain family. F-type ATPases have 2 components, F(1) - the catalytic core - and F(0) - the membrane proton channel. F(1) has five subunits: alpha(3), beta(3), gamma(1), delta(1), epsilon(1). F(0) has four main subunits: a(1), b(1), b'(1) and c(10-14). The alpha and beta chains form an alternating ring which encloses part of the gamma chain. F(1) is attached to F(0) by a central stalk formed by the gamma and epsilon chains, while a peripheral stalk is formed by the delta, b and b' chains.

The protein resides in the cellular thylakoid membrane. F(1)F(0) ATP synthase produces ATP from ADP in the presence of a proton or sodium gradient. F-type ATPases consist of two structural domains, F(1) containing the extramembraneous catalytic core and F(0) containing the membrane proton channel, linked together by a central stalk and a peripheral stalk. During catalysis, ATP synthesis in the catalytic domain of F(1) is coupled via a rotary mechanism of the central stalk subunits to proton translocation. Its function is as follows. Key component of the F(0) channel; it plays a direct role in translocation across the membrane. A homomeric c-ring of between 10-14 subunits forms the central stalk rotor element with the F(1) delta and epsilon subunits. This chain is ATP synthase subunit c, found in Synechococcus sp. (strain CC9311).